The primary structure comprises 162 residues: Transcriptional repressor NrdR (162 aa).

Residues 1 to 21 (MNCPDCGDEQTRVIDTETSAD) are disordered. A zinc finger spans residues 3 to 34 (CPDCGDEQTRVIDTETSADGTSVRRRRECQRC). Residues 49–139 (LQVKKRNGTI…VYKAFSEPQE (91 aa)) form the ATP-cone domain.

The protein belongs to the NrdR family. Requires Zn(2+) as cofactor.

In terms of biological role, negatively regulates transcription of bacterial ribonucleotide reductase nrd genes and operons by binding to NrdR-boxes. The chain is Transcriptional repressor NrdR from Halorubrum lacusprofundi (strain ATCC 49239 / DSM 5036 / JCM 8891 / ACAM 34).